A 220-amino-acid chain; its full sequence is Protein GrpE (220 aa).

It belongs to the GrpE family. Homodimer.

It is found in the cytoplasm. Participates actively in the response to hyperosmotic and heat shock by preventing the aggregation of stress-denatured proteins, in association with DnaK and GrpE. It is the nucleotide exchange factor for DnaK and may function as a thermosensor. Unfolded proteins bind initially to DnaJ; upon interaction with the DnaJ-bound protein, DnaK hydrolyzes its bound ATP, resulting in the formation of a stable complex. GrpE releases ADP from DnaK; ATP binding to DnaK triggers the release of the substrate protein, thus completing the reaction cycle. Several rounds of ATP-dependent interactions between DnaJ, DnaK and GrpE are required for fully efficient folding. In Bartonella quintana (strain Toulouse) (Rochalimaea quintana), this protein is Protein GrpE.